A 104-amino-acid polypeptide reads, in one-letter code: UPF0473 protein SH1304 (104 aa).

It belongs to the UPF0473 family.

This is UPF0473 protein SH1304 from Staphylococcus haemolyticus (strain JCSC1435).